The primary structure comprises 886 residues: Alanine--tRNA ligase (886 aa).

The Zn(2+) site is built by H564, H568, C666, and H670.

It belongs to the class-II aminoacyl-tRNA synthetase family. Zn(2+) is required as a cofactor.

The protein resides in the cytoplasm. It catalyses the reaction tRNA(Ala) + L-alanine + ATP = L-alanyl-tRNA(Ala) + AMP + diphosphate. Catalyzes the attachment of alanine to tRNA(Ala) in a two-step reaction: alanine is first activated by ATP to form Ala-AMP and then transferred to the acceptor end of tRNA(Ala). Also edits incorrectly charged Ser-tRNA(Ala) and Gly-tRNA(Ala) via its editing domain. This is Alanine--tRNA ligase from Prochlorococcus marinus (strain AS9601).